A 375-amino-acid polypeptide reads, in one-letter code: E3 ubiquitin-protein ligase RHF2A (375 aa).

Residues 33 to 74 (CSICLESFCESDPSTLTSCKHEYHLQCILEWCQRSSQCPMCW) form an RING-type; atypical zinc finger. The span at 146-159 (RARHGVRREGHRSR) shows a compositional bias: basic residues. Disordered stretches follow at residues 146–165 (RARH…SQGH), 172–262 (SSQP…SESL), and 318–375 (ERLE…SGSS). Pro residues predominate over residues 178 to 188 (SSPPPHPPMPS). Composition is skewed to polar residues over residues 211–245 (SHQS…SSPS) and 327–336 (RPSTASVSDV). Positions 337 to 365 (SENHTPETNNEHNRAAAGDEHSVNERGVK) are enriched in basic and acidic residues.

The catalysed reaction is S-ubiquitinyl-[E2 ubiquitin-conjugating enzyme]-L-cysteine + [acceptor protein]-L-lysine = [E2 ubiquitin-conjugating enzyme]-L-cysteine + N(6)-ubiquitinyl-[acceptor protein]-L-lysine.. It functions in the pathway protein modification; protein ubiquitination. Functionally, E3 ubiquitin-protein ligase involved in the positive regulation of the gametogenesis progression. Required for the degradation of KRP6, a cyclin-dependent kinase inhibitor which accumulates during meiosis and blocks the progression of subsequent mitoses during gametophytes development. Functions in association with RHF1A. The protein is E3 ubiquitin-protein ligase RHF2A of Arabidopsis thaliana (Mouse-ear cress).